The following is a 328-amino-acid chain: NADH-quinone oxidoreductase subunit H 2 (328 aa).

A run of 8 helical transmembrane segments spans residues 3–23 (LIVALGVIVFKVALVIAILLL), 77–97 (FLFKLAPILALAPPFVVFAAI), 119–139 (VALLFVFAVIGLEVYGVIFGG), 165–185 (MGFAVIGVVMLAQSMSLLDIV), 191–211 (VWNVVYQPIGFFVFFVAGLAE), 250–270 (MVLVSVLTVILFFGGWNGVLI), 272–292 (LPPLLWFLLKVAFFVYLFMWF), and 307–327 (IGWKVLLPLSLANIIISGVVF).

It belongs to the complex I subunit 1 family. NDH-1 is composed of 14 different subunits. Subunits NuoA, H, J, K, L, M, N constitute the membrane sector of the complex.

It is found in the cell inner membrane. The catalysed reaction is a quinone + NADH + 5 H(+)(in) = a quinol + NAD(+) + 4 H(+)(out). NDH-1 shuttles electrons from NADH, via FMN and iron-sulfur (Fe-S) centers, to quinones in the respiratory chain. The immediate electron acceptor for the enzyme in this species is believed to be ubiquinone. Couples the redox reaction to proton translocation (for every two electrons transferred, four hydrogen ions are translocated across the cytoplasmic membrane), and thus conserves the redox energy in a proton gradient. This subunit may bind ubiquinone. This is NADH-quinone oxidoreductase subunit H 2 from Rhizobium meliloti (strain 1021) (Ensifer meliloti).